A 203-amino-acid polypeptide reads, in one-letter code: Urease accessory protein UreG (203 aa).

12–19 (GPVGSGKT) lines the GTP pocket.

This sequence belongs to the SIMIBI class G3E GTPase family. UreG subfamily. Homodimer. UreD, UreF and UreG form a complex that acts as a GTP-hydrolysis-dependent molecular chaperone, activating the urease apoprotein by helping to assemble the nickel containing metallocenter of UreC. The UreE protein probably delivers the nickel.

The protein resides in the cytoplasm. Functionally, facilitates the functional incorporation of the urease nickel metallocenter. This process requires GTP hydrolysis, probably effectuated by UreG. The sequence is that of Urease accessory protein UreG from Alteromonas mediterranea (strain DSM 17117 / CIP 110805 / LMG 28347 / Deep ecotype).